The following is a 314-amino-acid chain: Ribosomal RNA small subunit methyltransferase H 2 (314 aa).

Residues 33–35, Asp-53, Tyr-80, Asp-101, and Gln-108 each bind S-adenosyl-L-methionine; that span reads AGH. Residues 293–314 form a disordered region; sequence KELEENSRSKSAKLRVFEKNDL.

Belongs to the methyltransferase superfamily. RsmH family.

Its subcellular location is the cytoplasm. It carries out the reaction cytidine(1402) in 16S rRNA + S-adenosyl-L-methionine = N(4)-methylcytidine(1402) in 16S rRNA + S-adenosyl-L-homocysteine + H(+). Specifically methylates the N4 position of cytidine in position 1402 (C1402) of 16S rRNA. In Agathobacter rectalis (strain ATCC 33656 / DSM 3377 / JCM 17463 / KCTC 5835 / VPI 0990) (Eubacterium rectale), this protein is Ribosomal RNA small subunit methyltransferase H 2.